The sequence spans 250 residues: Probable transcriptional regulatory protein DP2908 (250 aa).

The protein belongs to the TACO1 family.

It is found in the cytoplasm. In Desulfotalea psychrophila (strain LSv54 / DSM 12343), this protein is Probable transcriptional regulatory protein DP2908.